A 397-amino-acid chain; its full sequence is CCA-adding enzyme (397 aa).

ATP contacts are provided by G32 and R35. G32 and R35 together coordinate CTP. 2 residues coordinate Mg(2+): D45 and D47. 5 residues coordinate ATP: R116, D159, R162, R165, and R168. Positions 116, 159, 162, 165, and 168 each coordinate CTP.

The protein belongs to the tRNA nucleotidyltransferase/poly(A) polymerase family. Bacterial CCA-adding enzyme type 3 subfamily. Homodimer. Requires Mg(2+) as cofactor.

The catalysed reaction is a tRNA precursor + 2 CTP + ATP = a tRNA with a 3' CCA end + 3 diphosphate. It carries out the reaction a tRNA with a 3' CCA end + 2 CTP + ATP = a tRNA with a 3' CCACCA end + 3 diphosphate. Its function is as follows. Catalyzes the addition and repair of the essential 3'-terminal CCA sequence in tRNAs without using a nucleic acid template. Adds these three nucleotides in the order of C, C, and A to the tRNA nucleotide-73, using CTP and ATP as substrates and producing inorganic pyrophosphate. tRNA 3'-terminal CCA addition is required both for tRNA processing and repair. Also involved in tRNA surveillance by mediating tandem CCA addition to generate a CCACCA at the 3' terminus of unstable tRNAs. While stable tRNAs receive only 3'-terminal CCA, unstable tRNAs are marked with CCACCA and rapidly degraded. This is CCA-adding enzyme from Levilactobacillus brevis (strain ATCC 367 / BCRC 12310 / CIP 105137 / JCM 1170 / LMG 11437 / NCIMB 947 / NCTC 947) (Lactobacillus brevis).